A 245-amino-acid chain; its full sequence is 2,3-bisphosphoglycerate-dependent phosphoglycerate mutase (245 aa).

Residues 8 to 15 (RHGQSLWN), 21 to 22 (TG), Arg60, 87 to 90 (ERHY), Lys98, 114 to 115 (RR), and 183 to 184 (GN) each bind substrate. The active-site Tele-phosphohistidine intermediate is His9. Glu87 functions as the Proton donor/acceptor in the catalytic mechanism.

Belongs to the phosphoglycerate mutase family. BPG-dependent PGAM subfamily.

The catalysed reaction is (2R)-2-phosphoglycerate = (2R)-3-phosphoglycerate. It participates in carbohydrate degradation; glycolysis; pyruvate from D-glyceraldehyde 3-phosphate: step 3/5. Catalyzes the interconversion of 2-phosphoglycerate and 3-phosphoglycerate. In Bacillus cereus (strain G9842), this protein is 2,3-bisphosphoglycerate-dependent phosphoglycerate mutase.